The following is a 342-amino-acid chain: S-adenosylmethionine:tRNA ribosyltransferase-isomerase (342 aa).

The protein belongs to the QueA family. Monomer.

Its subcellular location is the cytoplasm. It carries out the reaction 7-aminomethyl-7-carbaguanosine(34) in tRNA + S-adenosyl-L-methionine = epoxyqueuosine(34) in tRNA + adenine + L-methionine + 2 H(+). The protein operates within tRNA modification; tRNA-queuosine biosynthesis. Its function is as follows. Transfers and isomerizes the ribose moiety from AdoMet to the 7-aminomethyl group of 7-deazaguanine (preQ1-tRNA) to give epoxyqueuosine (oQ-tRNA). The polypeptide is S-adenosylmethionine:tRNA ribosyltransferase-isomerase (Streptococcus pneumoniae serotype 19F (strain G54)).